The sequence spans 686 residues: MAM domain-containing protein 2 (686 aa).

The N-terminal stretch at 1–18 is a signal peptide; it reads MLLEGVLLVVQALQLASA. MAM domains follow at residues 24–169, 168–329, 340–498, and 507–666; these read GSCA…YCIE, IECD…HCQN, TSCD…NCRS, and GECT…PCAG. 2 N-linked (GlcNAc...) asparagine glycosylation sites follow: Asn134 and Asn329. Asn524 carries an N-linked (GlcNAc...) asparagine glycan. The tract at residues 665–686 is disordered; that stretch reads AGMEDTTEQSSGYSEDLNEIEY.

O-glycosylated; contains chondroitin sulfate.

Its subcellular location is the secreted. It is found in the extracellular space. It localises to the extracellular matrix. This Mus musculus (Mouse) protein is MAM domain-containing protein 2 (Mamdc2).